The primary structure comprises 502 residues: Glucose-6-phosphate isomerase (502 aa).

Catalysis depends on E331, which acts as the Proton donor. Active-site residues include H362 and K471.

This sequence belongs to the GPI family.

It localises to the cytoplasm. It catalyses the reaction alpha-D-glucose 6-phosphate = beta-D-fructose 6-phosphate. It functions in the pathway carbohydrate biosynthesis; gluconeogenesis. It participates in carbohydrate degradation; glycolysis; D-glyceraldehyde 3-phosphate and glycerone phosphate from D-glucose: step 2/4. Catalyzes the reversible isomerization of glucose-6-phosphate to fructose-6-phosphate. This chain is Glucose-6-phosphate isomerase, found in Xylella fastidiosa (strain 9a5c).